A 277-amino-acid polypeptide reads, in one-letter code: Large ribosomal subunit protein uL2 (277 aa).

The segment at 215-277 is disordered; the sequence is GIRPTVRGSV…KLIVKRRNDK (63 aa). Residues 264–277 show a composition bias toward basic and acidic residues; sequence KYSDKLIVKRRNDK.

Belongs to the universal ribosomal protein uL2 family. Part of the 50S ribosomal subunit. Forms a bridge to the 30S subunit in the 70S ribosome.

One of the primary rRNA binding proteins. Required for association of the 30S and 50S subunits to form the 70S ribosome, for tRNA binding and peptide bond formation. It has been suggested to have peptidyltransferase activity; this is somewhat controversial. Makes several contacts with the 16S rRNA in the 70S ribosome. In Clostridium acetobutylicum (strain ATCC 824 / DSM 792 / JCM 1419 / IAM 19013 / LMG 5710 / NBRC 13948 / NRRL B-527 / VKM B-1787 / 2291 / W), this protein is Large ribosomal subunit protein uL2.